Here is a 299-residue protein sequence, read N- to C-terminus: MSTNKRLRIAMQKKGRLSDESQELLKQCGVKINLQGQKLIAYAENLPIDILRVRDDDIPGLVFDGVVDLGIIGENVLEEEELTRTAAGDKVEYKMLRRLEFGGCRLSLAVDSDVEFDGPESLSDCRIATSYPQLLKRYMAEQGVPFKSILLNGSVEVAPRAGLADAICDLVSSGATLEANGLKEVEVIYRSKACLIQRKEPLSEEKQALVDKILTRIQGVQQADESKYIMLHAPKDKLEEITALLPGVENPTILPLAHDDTKVAVHVVSQENLFWETMEQLKEKGASSVLVLPIEKMLA.

This sequence belongs to the ATP phosphoribosyltransferase family. Long subfamily. Requires Mg(2+) as cofactor.

It localises to the cytoplasm. It catalyses the reaction 1-(5-phospho-beta-D-ribosyl)-ATP + diphosphate = 5-phospho-alpha-D-ribose 1-diphosphate + ATP. The protein operates within amino-acid biosynthesis; L-histidine biosynthesis; L-histidine from 5-phospho-alpha-D-ribose 1-diphosphate: step 1/9. Feedback inhibited by histidine. Its function is as follows. Catalyzes the condensation of ATP and 5-phosphoribose 1-diphosphate to form N'-(5'-phosphoribosyl)-ATP (PR-ATP). Has a crucial role in the pathway because the rate of histidine biosynthesis seems to be controlled primarily by regulation of HisG enzymatic activity. The sequence is that of ATP phosphoribosyltransferase from Mannheimia succiniciproducens (strain KCTC 0769BP / MBEL55E).